Here is a 686-residue protein sequence, read N- to C-terminus: Gamma-aminobutyric acid receptor alpha-like (686 aa).

Positions 1–58 are cleaved as a signal peptide; that stretch reads MCTMPATRDASGSGDASTDLIAARSLSSHQGQRSNLRIFKLLISCCLLMLCIYPNAWP. Residues 97–393 are Extracellular-facing; that stretch reads SSWLTQSNNH…NFHLQRHMGN (297 aa). Asn-108 carries N-linked (GlcNAc...) asparagine glycosylation. Residues Cys-233 and Cys-247 are joined by a disulfide bond. An N-linked (GlcNAc...) asparagine glycan is attached at Asn-292. Transmembrane regions (helical) follow at residues 394-414, 424-441, and 456-476; these read FLIQ…VSFW, VSLG…GLEA, and FFVF…AVVH. Residues 477-650 are Cytoplasmic-facing; that stretch reads YYTKYGSGEC…YNSVSKIDRA (174 aa). The segment at 570 to 641 is disordered; it reads KPPRADSDED…RRKGKRTPQY (72 aa). Over residues 586 to 596 the composition is skewed to polar residues; it reads QLRANEAPTTS. The span at 597–609 shows a compositional bias: low complexity; sequence AAAAAAQAAAQAA. Residues 651 to 671 traverse the membrane as a helical segment; it reads SRIVFPLLFILINVFYWYGYL.

The protein belongs to the ligand-gated ion channel (TC 1.A.9) family. Gamma-aminobutyric acid receptor (TC 1.A.9.5) subfamily. As to quaternary structure, generally pentameric. There are five types of GABA(A) receptor chains: alpha, beta, gamma, delta, and rho. Interacts with Lcch3 (beta chain).

The protein localises to the postsynaptic cell membrane. Its subcellular location is the cell membrane. Functionally, GABA, an inhibitory neurotransmitter, mediates neuronal inhibition by binding to the GABA receptor and opening an integral chloride channel. May combine with the ligand-gated ion channel subunit Lcch3 to form cation-selective GABA-gated ion channels. This is Gamma-aminobutyric acid receptor alpha-like (Grd) from Drosophila melanogaster (Fruit fly).